Consider the following 152-residue polypeptide: uncharacterized protein (152 aa).

This is an uncharacterized protein from Brachyspira hyodysenteriae (Treponema hyodysenteriae).